The sequence spans 2871 residues: Desmoplakin (2871 aa).

The interval 1–584 is interaction with PKP1, JUP, PKP2; sequence MSCNGGSHPR…DYMKTIADLE (584 aa). The globular 1 stretch occupies residues 1–1056; it reads MSCNGGSHPR…ANSENCNKNK (1056 aa). Phosphoserine occurs at positions 22 and 53. Residue Y56 is modified to Phosphotyrosine. T61 carries the phosphothreonine modification. S165, S166, and S176 each carry phosphoserine. Spectrin repeat units follow at residues 178–271 and 272–375; these read SGWD…HLRQ and LQNI…LKEN. Residues 376–446 form a Spectrin 3a repeat; the sequence is AAYFQFFEEA…NLVNKSKKIV (71 aa). Residues 458-515 form the SH3 domain; that stretch reads NKPIILRALCDYKQDQKIVHKGDECILKDNNERSKWYVTGPGGVDMLVPSVGLIIPPP. A Spectrin 3b repeat occupies 516-545; it reads NPLAVDLSCKIEQYYEAILALWNQLYINMK. Spectrin repeat units follow at residues 546–627, 654–769, and 770–883; these read SLVS…IQLP, VIET…SLCT, and VRAL…DLEK. Residues 1018–1945 are a coiled coil; it reads SEMLKSLEDL…QREIDKLRQR (928 aa). Positions 1057–1945 are central fibrous rod domain; that stretch reads FLDQNLQKYQ…QREIDKLRQR (889 aa). Phosphoserine is present on residues S1658, S1708, and S2024. Residues 1946-2871 are globular 2; sequence PYGSHRETQT…YSFSSSSIGH (926 aa). Residues 1960–2208 form a 4.5 X 38 AA tandem repeats (Domain A) region; it reads TVDTSKLVFD…LLLSVQKRSM (249 aa). 17 Plectin repeats span residues 2009–2045, 2046–2083, 2084–2121, 2122–2159, 2163–2197, 2198–2233, 2251–2288, 2289–2326, 2327–2364, 2365–2402, 2406–2440, 2456–2493, 2507–2544, 2610–2647, 2648–2685, 2724–2761, and 2762–2799; these read QPFL…PEST, VMLL…FDDR, QQIY…RETG, MRLL…RDLY, NDPR…PHTG, LLLL…PSTV, KDFL…PGTA, LELL…IEFK, EKLL…KGHG, IRLL…EELS, SDPS…EETG, SQKN…YETF, TITG…RKFF, SDTL…SITG, QRLL…QDMA, QRFL…GRAA, and QRLQ…DITG. Phosphoserine occurs at positions 2207, 2209, and 2225. The 4.5 X 38 AA tandem repeats (Domain B) stretch occupies residues 2244-2446; that stretch reads DEVGERIKDF…EETGLCLLPL (203 aa). The segment at 2609 to 2822 is 4.5 X 38 AA tandem repeats (Domain C); that stretch reads FSDTLEESSP…LPSPYNMSSA (214 aa). A phosphoserine mark is found at S2810 and S2815. Over residues 2810-2823 the composition is skewed to polar residues; that stretch reads SKGLPSPYNMSSAP. Residues 2810–2871 form a disordered region; that stretch reads SKGLPSPYNM…YSFSSSSIGH (62 aa). A Phosphotyrosine modification is found at Y2817. Phosphoserine is present on residues S2820, S2821, and S2825. The segment at 2824 to 2847 is 6 X 4 AA tandem repeats of G-S-R-[SR]; it reads GSRSGSRSGSRSGSRSGSRSGSRR. Over residues 2824 to 2847 the composition is skewed to low complexity; sequence GSRSGSRSGSRSGSRSGSRSGSRR. 2 positions are modified to omega-N-methylarginine: R2826 and R2847. S2849 carries the post-translational modification Phosphoserine. T2853 carries the phosphothreonine modification. The span at 2856 to 2871 shows a compositional bias: low complexity; that stretch reads SSYSYSYSFSSSSIGH. S2868 is modified (phosphoserine).

The protein belongs to the plakin or cytolinker family. As to quaternary structure, homodimer. Interacts with COL17A1 (via cytoplasmic region). Interacts with DSC2. Interacts with PKP2. Interacts with PKP1. Interacts weakly with TMEM65. Phosphorylation at Ser-2849 increases association with intermediate filament cytokeratin, potentially facilitating interaction between desmosome junctions and intermediate filament architecture. In terms of tissue distribution, expressed in oral mucosa (at protein level). Expressed in arrector pili muscle (at protein level). Expressed in the heart in the heart (at protein level). As to expression, apparently an obligate constituent of all desmosomes. Resides predominantly in tissues and cells of stratified origin.

The protein localises to the cell junction. The protein resides in the desmosome. Its subcellular location is the cell membrane. It localises to the cytoplasm. Functionally, major high molecular weight protein of desmosomes. Regulates profibrotic gene expression in cardiomyocytes via activation of the MAPK14/p38 MAPK signaling cascade and increase in TGFB1 protein abundance. The polypeptide is Desmoplakin (DSP) (Homo sapiens (Human)).